Reading from the N-terminus, the 415-residue chain is Imidazolonepropionase (415 aa).

Residues His76 and His78 each coordinate Fe(3+). The Zn(2+) site is built by His76 and His78. 4-imidazolone-5-propanoate contacts are provided by Arg85, Tyr148, and His181. Position 148 (Tyr148) interacts with N-formimidoyl-L-glutamate. His246 is a binding site for Fe(3+). Position 246 (His246) interacts with Zn(2+). Glu249 is a 4-imidazolone-5-propanoate binding site. Asp320 contributes to the Fe(3+) binding site. A Zn(2+)-binding site is contributed by Asp320. Residues Asn322 and Gly324 each contribute to the N-formimidoyl-L-glutamate site. Thr325 is a binding site for 4-imidazolone-5-propanoate.

This sequence belongs to the metallo-dependent hydrolases superfamily. HutI family. The cofactor is Zn(2+). Requires Fe(3+) as cofactor.

The protein localises to the cytoplasm. The enzyme catalyses 4-imidazolone-5-propanoate + H2O = N-formimidoyl-L-glutamate. Its pathway is amino-acid degradation; L-histidine degradation into L-glutamate; N-formimidoyl-L-glutamate from L-histidine: step 3/3. Functionally, catalyzes the hydrolytic cleavage of the carbon-nitrogen bond in imidazolone-5-propanoate to yield N-formimidoyl-L-glutamate. It is the third step in the universal histidine degradation pathway. In Caldanaerobacter subterraneus subsp. tengcongensis (strain DSM 15242 / JCM 11007 / NBRC 100824 / MB4) (Thermoanaerobacter tengcongensis), this protein is Imidazolonepropionase.